A 325-amino-acid polypeptide reads, in one-letter code: dITP/XTP pyrophosphatase (325 aa).

The unknown stretch occupies residues 1–128 (MKEKIYEYKD…KKVSELGDTI (128 aa)). Positions 129–324 (LIATRNEGKT…MEVFPAWQNA (196 aa)) are NTP pyrophosphatase. 132–137 (TRNEGK) contacts substrate. Residues glutamate 165 and aspartate 194 each contribute to the Mg(2+) site. Catalysis depends on aspartate 194, which acts as the Proton acceptor. Substrate is bound by residues serine 195, 278–281 (FGYD), lysine 301, and 306–307 (HR).

The protein belongs to the HAM1 NTPase family. As to quaternary structure, homodimer. Requires Mg(2+) as cofactor.

The catalysed reaction is XTP + H2O = XMP + diphosphate + H(+). It carries out the reaction dITP + H2O = dIMP + diphosphate + H(+). It catalyses the reaction ITP + H2O = IMP + diphosphate + H(+). Functionally, pyrophosphatase that catalyzes the hydrolysis of nucleoside triphosphates to their monophosphate derivatives, with a high preference for the non-canonical purine nucleotides XTP (xanthosine triphosphate), dITP (deoxyinosine triphosphate) and ITP. Seems to function as a house-cleaning enzyme that removes non-canonical purine nucleotides from the nucleotide pool, thus preventing their incorporation into DNA/RNA and avoiding chromosomal lesions. The chain is dITP/XTP pyrophosphatase from Streptococcus mutans serotype c (strain ATCC 700610 / UA159).